The following is a 59-amino-acid chain: Large ribosomal subunit protein bL32 (59 aa).

A disordered region spans residues 1–25 (MAVQQNKKSPSKRGMHRAHDFLTAP).

It belongs to the bacterial ribosomal protein bL32 family.

The sequence is that of Large ribosomal subunit protein bL32 from Azoarcus sp. (strain BH72).